The chain runs to 232 residues: Small ribosomal subunit protein uS3 (232 aa).

In terms of domain architecture, KH type-2 spans 39-107 (IRAFLKKKLY…EVNVNIKEER (69 aa)). A disordered region spans residues 211–232 (GVQPEKTEEEAPKKTRRARRGK). Positions 213 to 223 (QPEKTEEEAPK) are enriched in basic and acidic residues.

Belongs to the universal ribosomal protein uS3 family. Part of the 30S ribosomal subunit. Forms a tight complex with proteins S10 and S14.

Its function is as follows. Binds the lower part of the 30S subunit head. Binds mRNA in the 70S ribosome, positioning it for translation. In Campylobacter concisus (strain 13826), this protein is Small ribosomal subunit protein uS3.